The primary structure comprises 137 residues: NADH-quinone oxidoreductase subunit A 1 (137 aa).

3 consecutive transmembrane segments (helical) span residues 14–34 (FAAFLLGVVGLLAFMLGVSAL), 66–86 (FYLVAMLFVIFDVEALFLFAW), and 95–115 (WAGLIEATIFIAILLAGLVYL).

It belongs to the complex I subunit 3 family. As to quaternary structure, NDH-1 is composed of 13 different subunits. Subunits NuoA, H, J, K, L, M, N constitute the membrane sector of the complex.

It is found in the cell inner membrane. It catalyses the reaction a quinone + NADH + 5 H(+)(in) = a quinol + NAD(+) + 4 H(+)(out). In terms of biological role, NDH-1 shuttles electrons from NADH, via FMN and iron-sulfur (Fe-S) centers, to quinones in the respiratory chain. The immediate electron acceptor for the enzyme in this species is believed to be ubiquinone. Couples the redox reaction to proton translocation (for every two electrons transferred, four hydrogen ions are translocated across the cytoplasmic membrane), and thus conserves the redox energy in a proton gradient. The chain is NADH-quinone oxidoreductase subunit A 1 from Pseudomonas paraeruginosa (strain DSM 24068 / PA7) (Pseudomonas aeruginosa (strain PA7)).